Reading from the N-terminus, the 85-residue chain is MERNSRKVLQGRVISDNLKKTITVLVETYKNHPLYKKRVKYSKKYLAHDEQNQAHIGDKVSIMETRPLSKTKHFRLIEVIEKAIG.

The protein belongs to the universal ribosomal protein uS17 family. Part of the 30S ribosomal subunit.

One of the primary rRNA binding proteins, it binds specifically to the 5'-end of 16S ribosomal RNA. In Spiroplasma citri, this protein is Small ribosomal subunit protein uS17.